Consider the following 111-residue polypeptide: Probable 4-amino-4-deoxy-L-arabinose-phosphoundecaprenol flippase subunit ArnE (111 aa).

Helical transmembrane passes span 38–58 (LWLG…LLVL), 61–81 (LPVG…TLAA), and 91–111 (PRHW…GSAA). One can recognise an EamA domain in the interval 40-109 (LGLALICMGA…IISGIIILGS (70 aa)).

This sequence belongs to the ArnE family. Heterodimer of ArnE and ArnF.

Its subcellular location is the cell inner membrane. It participates in bacterial outer membrane biogenesis; lipopolysaccharide biosynthesis. In terms of biological role, translocates 4-amino-4-deoxy-L-arabinose-phosphoundecaprenol (alpha-L-Ara4N-phosphoundecaprenol) from the cytoplasmic to the periplasmic side of the inner membrane. The protein is Probable 4-amino-4-deoxy-L-arabinose-phosphoundecaprenol flippase subunit ArnE of Salmonella newport (strain SL254).